We begin with the raw amino-acid sequence, 417 residues long: Probable diacetyl reductase [(R)-acetoin forming] 2 (417 aa).

Cys-39 is a Zn(2+) binding site. Position 63 is a phosphoserine (Ser-63). 5 residues coordinate Zn(2+): His-64, Cys-120, Cys-123, Cys-131, and Gln-173. Positions 380-417 (GELNREADNEKKEISELSSRKDQERLRESINEAKLRHT) are disordered. The span at 381–417 (ELNREADNEKKEISELSSRKDQERLRESINEAKLRHT) shows a compositional bias: basic and acidic residues.

The protein belongs to the zinc-containing alcohol dehydrogenase family. Requires Zn(2+) as cofactor.

The protein localises to the cytoplasm. It is found in the nucleus. The enzyme catalyses (R)-acetoin + NAD(+) = diacetyl + NADH + H(+). Its function is as follows. Catalyzes the irreversible reduction of 2,3-butanediol to (S)-acetoin in the presence of NADH. This is Probable diacetyl reductase [(R)-acetoin forming] 2 (BDH2) from Saccharomyces cerevisiae (strain ATCC 204508 / S288c) (Baker's yeast).